Consider the following 264-residue polypeptide: PDZ domain-containing protein 9 (264 aa).

Positions 30-109 constitute a PDZ domain; that stretch reads QTKLTVGSLG…GTVLQIKVYR (80 aa).

The polypeptide is PDZ domain-containing protein 9 (PDZD9) (Homo sapiens (Human)).